Reading from the N-terminus, the 92-residue chain is Small ribosomal subunit protein uS19 (92 aa).

This sequence belongs to the universal ribosomal protein uS19 family.

Protein S19 forms a complex with S13 that binds strongly to the 16S ribosomal RNA. The polypeptide is Small ribosomal subunit protein uS19 (Methylobacterium nodulans (strain LMG 21967 / CNCM I-2342 / ORS 2060)).